A 524-amino-acid chain; its full sequence is Cytochrome P450 4F3 (524 aa).

A helical transmembrane segment spans residues 15–35 (AASPWLLLLLVGASCLLAYIL). C468 is a heme binding site.

Belongs to the cytochrome P450 family. Requires heme as cofactor.

The protein resides in the endoplasmic reticulum membrane. The protein localises to the microsome membrane. The catalysed reaction is leukotriene B4 + reduced [NADPH--hemoprotein reductase] + O2 = 18-hydroxy-leukotriene B4 + oxidized [NADPH--hemoprotein reductase] + H2O + H(+). It carries out the reaction leukotriene B4 + reduced [NADPH--hemoprotein reductase] + O2 = 19-hydroxy-leukotriene B4 + oxidized [NADPH--hemoprotein reductase] + H2O + H(+). Its pathway is lipid metabolism; leukotriene B4 degradation. Its function is as follows. A cytochrome P450 monooxygenase involved in the metabolism of the pro-inflammatory lipid mediator leukotriene B4 (LTB4). Hydroxylates at the omega-1 and omega-2 positions LTB4. This oxidation step leads to LTB4 inactivation, which is postulated to be a crucial part of the resolution of inflammation. Mechanistically, uses molecular oxygen inserting one oxygen atom into a substrate, and reducing the second into a water molecule, with two electrons provided by NADPH via cytochrome P450 reductase (CPR; NADPH-ferrihemoprotein reductase). This is Cytochrome P450 4F3 from Rattus norvegicus (Rat).